Reading from the N-terminus, the 418-residue chain is Flavin-dependent L-tryptophan oxidase VioA (418 aa).

A Mg(2+)-binding site is contributed by glycine 13. An FAD-binding site is contributed by serine 15. Glycine 16 is a binding site for Mg(2+). The FAD site is built by aspartate 38, arginine 46, and arginine 64. The substrate site is built by arginine 64 and histidine 163. Leucine 208 is a binding site for FAD. Residue alanine 240 participates in Mg(2+) binding. A substrate-binding site is contributed by tyrosine 309. Position 398 (methionine 398) interacts with FAD.

The protein belongs to the flavin monoamine oxidase family. As to quaternary structure, homodimer. The cofactor is FAD. Requires Mg(2+) as cofactor.

It catalyses the reaction L-tryptophan + O2 = 2-iminio-3-(indol-3-yl)propanoate + H2O2. The catalysed reaction is 7-chloro-L-tryptophan + O2 = 3-(7-chloroindol-3-yl)-2-iminopropanoate + H2O2. The protein operates within pigment biosynthesis; violacein biosynthesis. In terms of biological role, the enzyme generates the imine form of indole 3-pyruvate (IPA) from L-tryptophan (L-Trp), with concomitant two-electron reduction of O(2) to H(2)O(2). This is Flavin-dependent L-tryptophan oxidase VioA (vioA) from Chromobacterium violaceum (strain ATCC 12472 / DSM 30191 / JCM 1249 / CCUG 213 / NBRC 12614 / NCIMB 9131 / NCTC 9757 / MK).